Reading from the N-terminus, the 359-residue chain is MSFESTFEGLCEKFRILKQQLSAPETLGTQAFVVASREYSDLLPIMSLIEKYKSTQKEIAELEELVNSASTDPELRSLAKDESHIKQKLLPKLRHELQLSLLPKDRDDSRNAILEIRAGTGGEEAALFVGNLYRMYLKYAERKNWKVETINISTTGIGGYKEASFSIGGKDVFARLKFESGVHRVQRVPETESSGRLHTSAATVAVLPEVEEVDLKIDEKDLRIDVYRSSGPGGQSVNTTDSAVRITHIPTGIVVIQQDEKSQHKNKSKALKVLRARLYNLEKQKREEEISKMRKSQIGSGDRSERIRTYNFLQSRITDHRINLTSYRLDYVMKEGDLDEFIDALVADDQANKLKQITH.

At Gln235 the chain carries N5-methylglutamine.

It belongs to the prokaryotic/mitochondrial release factor family. Methylated by PrmC. Methylation increases the termination efficiency of RF1.

It localises to the cytoplasm. In terms of biological role, peptide chain release factor 1 directs the termination of translation in response to the peptide chain termination codons UAG and UAA. The polypeptide is Peptide chain release factor 1 (Anaplasma phagocytophilum (strain HZ)).